Reading from the N-terminus, the 255-residue chain is Pimeloyl-[acyl-carrier protein] methyl ester esterase (255 aa).

Positions 16–242 (LVLLHGWGLN…AAHAPFISHP (227 aa)) constitute an AB hydrolase-1 domain. Substrate is bound by residues W22, 82-83 (SL), and 143-147 (FLALQ). The active-site Nucleophile is S82. Active-site residues include D207 and H235. H235 lines the substrate pocket.

Belongs to the AB hydrolase superfamily. Carboxylesterase BioH family. As to quaternary structure, monomer.

The protein resides in the cytoplasm. The catalysed reaction is 6-carboxyhexanoyl-[ACP] methyl ester + H2O = 6-carboxyhexanoyl-[ACP] + methanol + H(+). The protein operates within cofactor biosynthesis; biotin biosynthesis. The physiological role of BioH is to remove the methyl group introduced by BioC when the pimeloyl moiety is complete. It allows to synthesize pimeloyl-ACP via the fatty acid synthetic pathway through the hydrolysis of the ester bonds of pimeloyl-ACP esters. This is Pimeloyl-[acyl-carrier protein] methyl ester esterase from Pectobacterium carotovorum subsp. carotovorum (strain PC1).